Reading from the N-terminus, the 453-residue chain is MTQDIVILAAGKGSRMKSAFSKVLHKVGGIAMVRRVLTTASTLPESKLHLVVGHQGEQVEANCQDFSANIVWQNDPQGTGDALRRVAPFLQADGATLTLYGDVPLIRASTLEKMTALSNSNTLVLLTISLDNPTGYGRIVRNEQGKVTAIVEQKDASESQLAIKEVNTGILLAPNNHLQGWLAALTNNNAQGEYYLTDVIAMAARDGVDIVTVNPENEAEVAGVNDRVQLAALERELQNQQAVSLMQNGATLLDPSRIDIRGELTTGHDVIIDVNCIFEGKVVLGTGVEVGPNCHLKNCTIGDNTIIKSNTLIEESQVGEHCDIGPFARLRPGTQLANKAKIGNFVETKKAIIGEGSKVNHLSYIGDTEMGANVNVGAGTITCNYDGVNKHLTQVADNVFIGSNTSLVAPVQVAEGAMIAAGSTITKQVGENQLAFARARQTNKDNWPRPIKK.

The interval 1–227 (MTQDIVILAA…EAEVAGVNDR (227 aa)) is pyrophosphorylase. UDP-N-acetyl-alpha-D-glucosamine-binding positions include 8–11 (LAAG), Lys22, Gln73, 78–79 (GT), 100–102 (YGD), Gly137, Glu152, Asn167, and Asn225. A Mg(2+)-binding site is contributed by Asp102. Asn225 serves as a coordination point for Mg(2+). Residues 228–248 (VQLAALERELQNQQAVSLMQN) are linker. An N-acetyltransferase region spans residues 249 to 453 (GATLLDPSRI…KDNWPRPIKK (205 aa)). Arg331 and Lys349 together coordinate UDP-N-acetyl-alpha-D-glucosamine. The active-site Proton acceptor is the His361. Positions 364 and 375 each coordinate UDP-N-acetyl-alpha-D-glucosamine. Residues Ala378, 384-385 (NY), Ser403, Ala421, and Arg438 each bind acetyl-CoA.

In the N-terminal section; belongs to the N-acetylglucosamine-1-phosphate uridyltransferase family. The protein in the C-terminal section; belongs to the transferase hexapeptide repeat family. Homotrimer. It depends on Mg(2+) as a cofactor.

The protein localises to the cytoplasm. The enzyme catalyses alpha-D-glucosamine 1-phosphate + acetyl-CoA = N-acetyl-alpha-D-glucosamine 1-phosphate + CoA + H(+). It catalyses the reaction N-acetyl-alpha-D-glucosamine 1-phosphate + UTP + H(+) = UDP-N-acetyl-alpha-D-glucosamine + diphosphate. It functions in the pathway nucleotide-sugar biosynthesis; UDP-N-acetyl-alpha-D-glucosamine biosynthesis; N-acetyl-alpha-D-glucosamine 1-phosphate from alpha-D-glucosamine 6-phosphate (route II): step 2/2. Its pathway is nucleotide-sugar biosynthesis; UDP-N-acetyl-alpha-D-glucosamine biosynthesis; UDP-N-acetyl-alpha-D-glucosamine from N-acetyl-alpha-D-glucosamine 1-phosphate: step 1/1. It participates in bacterial outer membrane biogenesis; LPS lipid A biosynthesis. Catalyzes the last two sequential reactions in the de novo biosynthetic pathway for UDP-N-acetylglucosamine (UDP-GlcNAc). The C-terminal domain catalyzes the transfer of acetyl group from acetyl coenzyme A to glucosamine-1-phosphate (GlcN-1-P) to produce N-acetylglucosamine-1-phosphate (GlcNAc-1-P), which is converted into UDP-GlcNAc by the transfer of uridine 5-monophosphate (from uridine 5-triphosphate), a reaction catalyzed by the N-terminal domain. The sequence is that of Bifunctional protein GlmU from Marinomonas sp. (strain MWYL1).